Consider the following 379-residue polypeptide: Chaperone protein DnaJ (379 aa).

Positions 5 to 70 (DFYEVLGVSR…QKRSAYDQYG (66 aa)) constitute a J domain. The CR-type zinc finger occupies 134–212 (GCDKEIEVPT…CHGEGRVHKT (79 aa)). Zn(2+)-binding residues include cysteine 147, cysteine 150, cysteine 164, cysteine 167, cysteine 186, cysteine 189, cysteine 200, and cysteine 203. CXXCXGXG motif repeat units lie at residues 147–154 (CDPCEGTG), 164–171 (CSTCHGQG), 186–193 (CPTCHGKG), and 200–207 (CNSCHGEG).

The protein belongs to the DnaJ family. In terms of assembly, homodimer. Zn(2+) serves as cofactor.

It localises to the cytoplasm. Participates actively in the response to hyperosmotic and heat shock by preventing the aggregation of stress-denatured proteins and by disaggregating proteins, also in an autonomous, DnaK-independent fashion. Unfolded proteins bind initially to DnaJ; upon interaction with the DnaJ-bound protein, DnaK hydrolyzes its bound ATP, resulting in the formation of a stable complex. GrpE releases ADP from DnaK; ATP binding to DnaK triggers the release of the substrate protein, thus completing the reaction cycle. Several rounds of ATP-dependent interactions between DnaJ, DnaK and GrpE are required for fully efficient folding. Also involved, together with DnaK and GrpE, in the DNA replication of plasmids through activation of initiation proteins. The chain is Chaperone protein DnaJ from Aliivibrio fischeri (strain ATCC 700601 / ES114) (Vibrio fischeri).